Reading from the N-terminus, the 174-residue chain is NADH-quinone oxidoreductase subunit C (174 aa).

This sequence belongs to the complex I 30 kDa subunit family. NDH-1 is composed of 14 different subunits. Subunits NuoB, C, D, E, F, and G constitute the peripheral sector of the complex.

The protein localises to the cell membrane. It carries out the reaction a quinone + NADH + 5 H(+)(in) = a quinol + NAD(+) + 4 H(+)(out). In terms of biological role, NDH-1 shuttles electrons from NADH, via FMN and iron-sulfur (Fe-S) centers, to quinones in the respiratory chain. The immediate electron acceptor for the enzyme in this species is believed to be ubiquinone. Couples the redox reaction to proton translocation (for every two electrons transferred, four hydrogen ions are translocated across the cytoplasmic membrane), and thus conserves the redox energy in a proton gradient. This is NADH-quinone oxidoreductase subunit C from Roseiflexus castenholzii (strain DSM 13941 / HLO8).